We begin with the raw amino-acid sequence, 356 residues long: UDP-N-acetylenolpyruvoylglucosamine reductase (356 aa).

The FAD-binding PCMH-type domain occupies 19–227 (LGGPAARFCS…RDAVLSLRRS (209 aa)). The active site involves arginine 167. Catalysis depends on serine 244, which acts as the Proton donor. Glutamate 348 is a catalytic residue.

This sequence belongs to the MurB family. It depends on FAD as a cofactor.

The protein resides in the cytoplasm. The enzyme catalyses UDP-N-acetyl-alpha-D-muramate + NADP(+) = UDP-N-acetyl-3-O-(1-carboxyvinyl)-alpha-D-glucosamine + NADPH + H(+). The protein operates within cell wall biogenesis; peptidoglycan biosynthesis. Its function is as follows. Cell wall formation. In Thermobifida fusca (strain YX), this protein is UDP-N-acetylenolpyruvoylglucosamine reductase.